The primary structure comprises 244 residues: MNYEKIDSTIPGPGISETDWNDVFEGCNCEAECSSAAGCSCLINKIDNYTVDGKINKSSELLIECSDQCACILLPTSCRNRVVQCGPQKKLEIFSTCEMAKGFGVRAGEQIAAGEFVCEYAGECIGEQEVERRCREFRGDDNYTLTLKEFFGGKPVKTFVDPRLRGNIGRFLNHSCEPNCEIILARLGRMIPAAGIFAKRDIVRGEELCYDYGHSAIEGENRKLCLCKSEKCRKYLPMSATPIE.

The 62-residue stretch at 25–86 (EGCNCEAECS…SCRNRVVQCG (62 aa)) folds into the Pre-SET domain. 9 residues coordinate Zn(2+): C27, C29, C33, C39, C41, C65, C69, C71, and C78. One can recognise an SET domain in the interval 89–213 (KKLEIFSTCE…RGEELCYDYG (125 aa)). Residues 101–103 (KGF), D141, Y143, R170, and 173–174 (NH) contribute to the S-adenosyl-L-methionine site. Residues C176, C225, C227, and C232 each contribute to the Zn(2+) site. A Post-SET domain is found at 221–237 (NRKLCLCKSEKCRKYLP).

The protein belongs to the class V-like SAM-binding methyltransferase superfamily. Histone-lysine methyltransferase family. Suvar3-9 subfamily.

Its subcellular location is the nucleus. It localises to the chromosome. It carries out the reaction L-lysyl-[histone] + S-adenosyl-L-methionine = N(6)-methyl-L-lysyl-[histone] + S-adenosyl-L-homocysteine + H(+). Functionally, probable histone methyltransferase. Required for embryonic development. The chain is Probable histone-lysine N-methyltransferase set-23 (set-23) from Caenorhabditis elegans.